The primary structure comprises 270 residues: uncharacterized protein (270 aa).

One can recognise a J domain in the interval 43–112; sequence CTANDIKRKY…REEYDRFGIH (70 aa). Residues 239-270 form a disordered region; the sequence is EQSKQIPTQQKPSSLPPPERALPAPTMPTPSS. Over residues 242–251 the composition is skewed to polar residues; the sequence is KQIPTQQKPS. Positions 252–270 are enriched in pro residues; sequence SLPPPERALPAPTMPTPSS.

This is an uncharacterized protein from Schizosaccharomyces pombe (strain 972 / ATCC 24843) (Fission yeast).